Consider the following 513-residue polypeptide: Pleiotropic regulator 1 (513 aa).

Met1 bears the N-acetylmethionine mark. The disordered stretch occupies residues 60-79; it reads TSKENLKEKGPQNATDSYPH. Ser119 is modified (phosphoserine). Positions 136 to 160 are disordered; the sequence is VDANRTGPAGSEYRHPGASDRSQPT. Ser200 bears the Phosphoserine mark. WD repeat units follow at residues 201 to 240, 243 to 282, 285 to 324, 327 to 366, 369 to 409, 410 to 448, and 459 to 498; these read GHLG…LKLS, GHIS…VIRH, GHLS…SVHT, GHTN…TRVT, NHKK…QNLS, GHNA…NFQR, and DSES…TEET. Ser390 carries the phosphoserine modification.

Belongs to the WD repeat PRL1/PRL2 family. As to quaternary structure, identified in the spliceosome C complex. Component of the PRP19-CDC5L splicing complex composed of a core complex comprising a homotetramer of PRPF19, CDC5L, PLRG1 and BCAS2, and at least three less stably associated proteins CTNNBL1, CWC15 and HSPA8. Interacts (via its WD40 repeat domain) directly with CDC5L (via its C-terminal); the interaction is required for mRNA splicing but not for spliceosome assembly. Component of the minor spliceosome, which splices U12-type introns. Within this complex, interacts with CRIPT. Also interacts directly in the complex with BCAS2 and PRPF19. Interacts with USB1.

Its subcellular location is the nucleus. It is found in the nucleus speckle. Its function is as follows. Involved in pre-mRNA splicing as component of the spliceosome. Component of the PRP19-CDC5L complex that forms an integral part of the spliceosome and is required for activating pre-mRNA splicing. As a component of the minor spliceosome, involved in the splicing of U12-type introns in pre-mRNAs. This Mus musculus (Mouse) protein is Pleiotropic regulator 1 (Plrg1).